Consider the following 220-residue polypeptide: ATP-dependent dethiobiotin synthetase BioD (220 aa).

11 to 16 (GVGKTF) serves as a coordination point for ATP. Thr-15 lines the Mg(2+) pocket. The active site involves Lys-36. Thr-40 provides a ligand contact to substrate. ATP is bound by residues Asp-48 and 107-110 (EGAG). Asp-48 and Glu-107 together coordinate Mg(2+).

This sequence belongs to the dethiobiotin synthetase family. In terms of assembly, homodimer. Mg(2+) is required as a cofactor.

Its subcellular location is the cytoplasm. The catalysed reaction is (7R,8S)-7,8-diammoniononanoate + CO2 + ATP = (4R,5S)-dethiobiotin + ADP + phosphate + 3 H(+). It participates in cofactor biosynthesis; biotin biosynthesis; biotin from 7,8-diaminononanoate: step 1/2. In terms of biological role, catalyzes a mechanistically unusual reaction, the ATP-dependent insertion of CO2 between the N7 and N8 nitrogen atoms of 7,8-diaminopelargonic acid (DAPA, also called 7,8-diammoniononanoate) to form a ureido ring. This is ATP-dependent dethiobiotin synthetase BioD from Aquifex aeolicus (strain VF5).